The primary structure comprises 97 residues: Small ribosomal subunit protein uS17 (97 aa).

The disordered stretch occupies residues 1 to 20 (MSEATVNDNAAVKNEKGARK).

It belongs to the universal ribosomal protein uS17 family. In terms of assembly, part of the 30S ribosomal subunit.

One of the primary rRNA binding proteins, it binds specifically to the 5'-end of 16S ribosomal RNA. This chain is Small ribosomal subunit protein uS17, found in Corynebacterium jeikeium (strain K411).